A 106-amino-acid chain; its full sequence is Ferredoxin (106 aa).

[3Fe-4S] cluster is bound by residues Cys9 and Cys17. [4Fe-4S] cluster is bound by residues Cys21, Cys40, Cys43, and Cys46. One can recognise a 4Fe-4S ferredoxin-type domain in the interval 31–60 (RMLYIHPDECVDCGACEPVCPVEAIYYEDD). Cys50 is a [3Fe-4S] cluster binding site. A disordered region spans residues 84 to 106 (GAAKVGKVDRDVEPVSSLPPQGE).

[4Fe-4S] cluster is required as a cofactor. It depends on [3Fe-4S] cluster as a cofactor.

Its function is as follows. Ferredoxins are iron-sulfur proteins that transfer electrons in a wide variety of metabolic reactions. In Saccharopolyspora erythraea (Streptomyces erythraeus), this protein is Ferredoxin (fdxA).